The following is a 637-amino-acid chain: Early transcription factor 70 kDa subunit (637 aa).

Residues Arg32–Glu185 form the Helicase ATP-binding domain. His45–Thr52 serves as a coordination point for ATP. The short motif at Asp135–His138 is the DEXH box element. Positions Lys327–Leu507 constitute a Helicase C-terminal domain.

Belongs to the helicase family. VETF subfamily. As to quaternary structure, heterodimer of a 70 kDa and a 82 kDa subunit. Part of the early transcription complex composed of ETF, RAP94/OPG109, and the DNA-directed RNA polymerase.

It is found in the virion. Acts with RNA polymerase to initiate transcription from early gene promoters. Is recruited by the RPO-associated protein of 94 kDa RAP94/OPG109 to form the early transcription complex, which also contains the core RNA polymerase. ETF heterodimer binds to early gene promoters. The sequence is that of Early transcription factor 70 kDa subunit (OPG118) from Vaccinia virus (strain Ankara) (VACV).